The chain runs to 493 residues: Protein nucleotidyltransferase YdiU (493 aa).

The ATP site is built by Gly-81, Gly-83, Arg-84, Lys-103, Asp-115, Gly-116, Arg-166, and Arg-173. Asp-244 acts as the Proton acceptor in catalysis. Mg(2+) contacts are provided by Asn-245 and Asp-254. Asp-254 is a binding site for ATP.

The protein belongs to the SELO family. The cofactor is Mg(2+). Mn(2+) is required as a cofactor.

The enzyme catalyses L-seryl-[protein] + ATP = 3-O-(5'-adenylyl)-L-seryl-[protein] + diphosphate. The catalysed reaction is L-threonyl-[protein] + ATP = 3-O-(5'-adenylyl)-L-threonyl-[protein] + diphosphate. It catalyses the reaction L-tyrosyl-[protein] + ATP = O-(5'-adenylyl)-L-tyrosyl-[protein] + diphosphate. It carries out the reaction L-histidyl-[protein] + UTP = N(tele)-(5'-uridylyl)-L-histidyl-[protein] + diphosphate. The enzyme catalyses L-seryl-[protein] + UTP = O-(5'-uridylyl)-L-seryl-[protein] + diphosphate. The catalysed reaction is L-tyrosyl-[protein] + UTP = O-(5'-uridylyl)-L-tyrosyl-[protein] + diphosphate. Its function is as follows. Nucleotidyltransferase involved in the post-translational modification of proteins. It can catalyze the addition of adenosine monophosphate (AMP) or uridine monophosphate (UMP) to a protein, resulting in modifications known as AMPylation and UMPylation. This Shewanella frigidimarina (strain NCIMB 400) protein is Protein nucleotidyltransferase YdiU.